Reading from the N-terminus, the 86-residue chain is NADH-ubiquinone oxidoreductase chain 4L (86 aa).

2 helical membrane-spanning segments follow: residues leucine 22–tyrosine 42 and phenylalanine 52–leucine 72.

This sequence belongs to the complex I subunit 4L family.

It is found in the mitochondrion membrane. The catalysed reaction is a ubiquinone + NADH + 5 H(+)(in) = a ubiquinol + NAD(+) + 4 H(+)(out). In terms of biological role, core subunit of the mitochondrial membrane respiratory chain NADH dehydrogenase (Complex I) that is believed to belong to the minimal assembly required for catalysis. Complex I functions in the transfer of electrons from NADH to the respiratory chain. The immediate electron acceptor for the enzyme is believed to be ubiquinone. The polypeptide is NADH-ubiquinone oxidoreductase chain 4L (ND4L) (Artemia salina (Brine shrimp)).